Here is a 204-residue protein sequence, read N- to C-terminus: Urease accessory protein UreG (204 aa).

A GTP-binding site is contributed by 13–20 (GPVGSGKT).

Belongs to the SIMIBI class G3E GTPase family. UreG subfamily. As to quaternary structure, homodimer. UreD, UreF and UreG form a complex that acts as a GTP-hydrolysis-dependent molecular chaperone, activating the urease apoprotein by helping to assemble the nickel containing metallocenter of UreC. The UreE protein probably delivers the nickel.

It localises to the cytoplasm. Its function is as follows. Facilitates the functional incorporation of the urease nickel metallocenter. This process requires GTP hydrolysis, probably effectuated by UreG. The protein is Urease accessory protein UreG of Acinetobacter baylyi (strain ATCC 33305 / BD413 / ADP1).